The sequence spans 192 residues: dTTP/UTP pyrophosphatase (192 aa).

Asp71 serves as the catalytic Proton acceptor.

The protein belongs to the Maf family. YhdE subfamily. The cofactor is a divalent metal cation.

It localises to the cytoplasm. The catalysed reaction is dTTP + H2O = dTMP + diphosphate + H(+). It catalyses the reaction UTP + H2O = UMP + diphosphate + H(+). Nucleoside triphosphate pyrophosphatase that hydrolyzes dTTP and UTP. May have a dual role in cell division arrest and in preventing the incorporation of modified nucleotides into cellular nucleic acids. This is dTTP/UTP pyrophosphatase from Clostridium tetani (strain Massachusetts / E88).